The sequence spans 357 residues: 3-isopropylmalate dehydrogenase (357 aa).

76–89 (GPQWDTIDPALRPE) is a binding site for NAD(+). Substrate contacts are provided by arginine 96, arginine 106, arginine 134, and aspartate 224. The Mg(2+) site is built by aspartate 224, aspartate 248, and aspartate 252. Residue 282 to 294 (GSAPDIAGQGVAN) participates in NAD(+) binding.

This sequence belongs to the isocitrate and isopropylmalate dehydrogenases family. LeuB type 1 subfamily. In terms of assembly, homodimer. Requires Mg(2+) as cofactor. Mn(2+) serves as cofactor.

The protein resides in the cytoplasm. It carries out the reaction (2R,3S)-3-isopropylmalate + NAD(+) = 4-methyl-2-oxopentanoate + CO2 + NADH. It functions in the pathway amino-acid biosynthesis; L-leucine biosynthesis; L-leucine from 3-methyl-2-oxobutanoate: step 3/4. Catalyzes the oxidation of 3-carboxy-2-hydroxy-4-methylpentanoate (3-isopropylmalate) to 3-carboxy-4-methyl-2-oxopentanoate. The product decarboxylates to 4-methyl-2 oxopentanoate. This chain is 3-isopropylmalate dehydrogenase, found in Xylella fastidiosa (strain 9a5c).